Consider the following 409-residue polypeptide: Terpredoxin reductase (409 aa).

An FAD-binding site is contributed by 7 to 38 (TTVIVGAGHAGTAAAFFLREFGYHGRVLLLSA). 151-159 (GGGFIGLEI) provides a ligand contact to NAD(+).

The cofactor is FAD.

The oxidation of alpha-terpineol by cytochrome p450-TERP requires the participation of a flavoprotein, terpredoxin reductase, and an iron-sulfur protein, terpredoxin, to mediate the transfer of electrons from NADH to P450 for oxygen activation. The chain is Terpredoxin reductase (terPA) from Pseudomonas sp.